The chain runs to 729 residues: Kinesin-like protein KAR3 (729 aa).

The disordered stretch occupies residues 1–48 (MESLPRTPTKGRSTQHLSTPSPKNDILAMNGHKRRNTTTPPPKHTLLK). The segment at 1–109 (MESLPRTPTK…ENVNELNRTQ (109 aa)) is globular. The segment covering 10 to 22 (KGRSTQHLSTPSP) has biased composition (polar residues). Residues 110 to 357 (AILFEKKATL…LEEYIKDTEL (248 aa)) are a coiled coil. ATP-binding residues include N386, R388, R392, E454, G477, S478, G479, K480, T481, F482, E554, K579, and T694. In terms of domain architecture, Kinesin motor spans 386-723 (NIRVYCRIRP…LRFASKVNST (338 aa)).

This sequence belongs to the TRAFAC class myosin-kinesin ATPase superfamily. Kinesin family. NCD subfamily. As to quaternary structure, interacts with CIK1; the interaction is direct. Interacts with VIK1; the interaction is direct.

It localises to the cytoplasm. The protein resides in the cytoskeleton. It is found in the microtubule organizing center. The protein localises to the spindle pole body. Its subcellular location is the nucleus. It localises to the chromosome. The protein resides in the spindle. It catalyses the reaction ATP + H2O = ADP + phosphate + H(+). It carries out the reaction ATP + H2O + a kinesin associated with a microtubule at position (n) = ADP + phosphate + a kinesin associated with a microtubule at position (n-1, toward the minus end).. In terms of biological role, minus end-directed microtubule (MT) motor involved in spindle midzone assembly, poleward transport of newly captured kinetochores along the lateral side of MTs, karyogamy (nuclear fusion) during mating, and with an essential function in meiosis I. Functions together with the accessory proteins CIK1 or VIK1. Drives the poleward transport of newly captured kinetochores along the lateral side of MTs, both during S-phase and during M-phase. To contribute to spindle midzone assembly during mitotic metaphase, the nuclear KAR3-CIK1 motor cross-links anti-parallel microtubules to align them on the spindle axis; as the motor travels polewards splayed microtubules are pulled into alignment. During the karyogamy (nuclear fusion) step of mating, KAR3-CIK1 cross-links antiparallel cytoplasmic microtubules emanating from the spindle pole bodies of mating partners; the motor activity of KAR3 creates the force that pulls the nuclei together by sliding cross-linked microtubules past one another. KAR3-CIK1 promotes microtubule shortening predominantly from the microtubule plus-end. Together with cytoplasmic VIK1, may act to stabilize microtubules. Requires accessory protein VIK1 for spindle pole body localization and to allow the CIN8 and KIP1 motors to generate outwardly directed spindle forces. Essential during meiosis I. The ATPase activity is stimulated by microtubule-binding. This chain is Kinesin-like protein KAR3 (KAR3), found in Saccharomyces cerevisiae (strain ATCC 204508 / S288c) (Baker's yeast).